Here is a 511-residue protein sequence, read N- to C-terminus: Cytochrome P450 26B1 (511 aa).

Cys440 lines the heme pocket.

This sequence belongs to the cytochrome P450 family. Heme is required as a cofactor.

The protein localises to the endoplasmic reticulum membrane. It localises to the microsome membrane. The enzyme catalyses all-trans-retinoate + reduced [NADPH--hemoprotein reductase] + O2 = all-trans-4-hydroxyretinoate + oxidized [NADPH--hemoprotein reductase] + H2O + H(+). The catalysed reaction is all-trans-retinoate + reduced [NADPH--hemoprotein reductase] + O2 = all-trans-18-hydroxyretinoate + oxidized [NADPH--hemoprotein reductase] + H2O + H(+). In terms of biological role, a cytochrome P450 monooxygenase involved in the metabolism of retinoates (RAs), the active metabolites of vitamin A, and critical signaling molecules in animals. RAs exist as at least four different isomers: all-trans-RA (atRA), 9-cis-RA, 13-cis-RA, and 9,13-dicis-RA, where atRA is considered to be the biologically active isomer, although 9-cis-RA and 13-cis-RA also have activity. Catalyzes the hydroxylation of atRA primarily at C-4 and C-18, thereby contributing to the regulation of atRA homeostasis and signaling. Hydroxylation of atRA limits its biological activity and initiates a degradative process leading to its eventual elimination. Involved in the convertion of atRA to all-trans-4-oxo-RA. Can oxidize all-trans-13,14-dihydroretinoate (DRA) to metabolites which could include all-trans-4-oxo-DRA, all-trans-4-hydroxy-DRA, all-trans-5,8-epoxy-DRA, and all-trans-18-hydroxy-DRA. Plays a role in skeletal development, both at the level of patterning and in the ossification of bone and the establishment of some synovial joints. This chain is Cytochrome P450 26B1, found in Danio rerio (Zebrafish).